The primary structure comprises 277 residues: NH(3)-dependent NAD(+) synthetase (277 aa).

36–43 (GLSGGIDS) is a binding site for ATP. Aspartate 42 is a Mg(2+) binding site. Arginine 118 is a deamido-NAD(+) binding site. ATP is bound at residue threonine 138. Glutamate 143 is a binding site for Mg(2+). Positions 167 and 189 each coordinate ATP.

It belongs to the NAD synthetase family. In terms of assembly, homodimer.

It carries out the reaction deamido-NAD(+) + NH4(+) + ATP = AMP + diphosphate + NAD(+) + H(+). The protein operates within cofactor biosynthesis; NAD(+) biosynthesis; NAD(+) from deamido-NAD(+) (ammonia route): step 1/1. Its function is as follows. Catalyzes the ATP-dependent amidation of deamido-NAD to form NAD. Uses ammonia as a nitrogen source. This is NH(3)-dependent NAD(+) synthetase from Chlorobaculum parvum (strain DSM 263 / NCIMB 8327) (Chlorobium vibrioforme subsp. thiosulfatophilum).